Here is a 267-residue protein sequence, read N- to C-terminus: MIQKKTFIHPTSIVEKGAIVHEGAHIGPFCYIGSQVEIGSGTELKSHIVINGITKIGKNNVIYQFCSIGEVNQDLKYKGEFTRVEIGDSNLIRESVSIHRGTEQGEGVTCVGNHNLLMFNTHVAHDCLIGHHCILANSTTLGGHVEIHDHAVIGGLSAVHQFCKVGSYAMLAGCSAVVKHIPPFILAQGNHASLVGPNTVGLKRHFSEAKYKAILRAYQLLYKQGKSLEDAKLELAKLAELHPVVILLLNFLNQIDLNSDKNRGIVR.

Belongs to the transferase hexapeptide repeat family. LpxA subfamily. In terms of assembly, homotrimer.

Its subcellular location is the cytoplasm. It carries out the reaction a (3R)-hydroxyacyl-[ACP] + UDP-N-acetyl-alpha-D-glucosamine = a UDP-3-O-[(3R)-3-hydroxyacyl]-N-acetyl-alpha-D-glucosamine + holo-[ACP]. Its pathway is glycolipid biosynthesis; lipid IV(A) biosynthesis; lipid IV(A) from (3R)-3-hydroxytetradecanoyl-[acyl-carrier-protein] and UDP-N-acetyl-alpha-D-glucosamine: step 1/6. Involved in the biosynthesis of lipid A, a phosphorylated glycolipid that anchors the lipopolysaccharide to the outer membrane of the cell. This is Acyl-[acyl-carrier-protein]--UDP-N-acetylglucosamine O-acyltransferase from Hamiltonella defensa subsp. Acyrthosiphon pisum (strain 5AT).